The following is a 518-amino-acid chain: GMP synthase [glutamine-hydrolyzing] (518 aa).

Residues 11 to 203 (KIIVLDFGSQ…AFDVCQARSN (193 aa)) form the Glutamine amidotransferase type-1 domain. The active-site Nucleophile is the Cys-88. Catalysis depends on residues His-177 and Glu-179. Positions 204 to 393 (WSMDDFIDMQ…LGMPHELVWR (190 aa)) constitute a GMPS ATP-PPase domain. 231–237 (SGGVDSS) contacts ATP.

In terms of assembly, homodimer.

The enzyme catalyses XMP + L-glutamine + ATP + H2O = GMP + L-glutamate + AMP + diphosphate + 2 H(+). Its pathway is purine metabolism; GMP biosynthesis; GMP from XMP (L-Gln route): step 1/1. Its function is as follows. Catalyzes the synthesis of GMP from XMP. The chain is GMP synthase [glutamine-hydrolyzing] from Ligilactobacillus salivarius (strain UCC118) (Lactobacillus salivarius).